Consider the following 395-residue polypeptide: Elongation factor Tu (395 aa).

Residues 10-204 (KTHANIGTIG…AVDSYIPTPE (195 aa)) form the tr-type G domain. Positions 19-26 (GHVDHGKT) are G1. Residue 19-26 (GHVDHGKT) coordinates GTP. Mg(2+) is bound at residue threonine 26. The interval 60–64 (GITIN) is G2. Residues 81–84 (DCPG) are G3. Residues 81–85 (DCPGH) and 136–139 (NKCD) each bind GTP. Positions 136 to 139 (NKCD) are G4. Positions 174–176 (SAL) are G5.

Belongs to the TRAFAC class translation factor GTPase superfamily. Classic translation factor GTPase family. EF-Tu/EF-1A subfamily. In terms of assembly, monomer.

The protein localises to the cytoplasm. The catalysed reaction is GTP + H2O = GDP + phosphate + H(+). In terms of biological role, GTP hydrolase that promotes the GTP-dependent binding of aminoacyl-tRNA to the A-site of ribosomes during protein biosynthesis. This is Elongation factor Tu from Lysinibacillus sphaericus (strain C3-41).